We begin with the raw amino-acid sequence, 235 residues long: UPF0502 protein Bmul_3231/BMULJ_05293 (235 aa).

It belongs to the UPF0502 family.

The chain is UPF0502 protein Bmul_3231/BMULJ_05293 from Burkholderia multivorans (strain ATCC 17616 / 249).